The following is a 57-amino-acid chain: UPF0391 membrane protein Nwi_2359 (57 aa).

The next 2 helical transmembrane spans lie at 4–24 and 30–50; these read WVVT…GGIA and IAKI…VVGF.

It belongs to the UPF0391 family.

The protein resides in the cell membrane. This chain is UPF0391 membrane protein Nwi_2359, found in Nitrobacter winogradskyi (strain ATCC 25391 / DSM 10237 / CIP 104748 / NCIMB 11846 / Nb-255).